The sequence spans 299 residues: Protoheme IX farnesyltransferase (299 aa).

Transmembrane regions (helical) follow at residues 29 to 49 (VVTL…PGAV), 51 to 71 (LQPL…AAAM), 100 to 120 (HAAT…YWLV), 123 to 143 (LTAW…TAYL), 150 to 170 (NIVI…TAVT), 177 to 197 (GLLL…ALAI), 223 to 243 (CIFL…LVGM), 244 to 264 (SGAL…YKAW), and 275 to 295 (AMDV…LLLV).

This sequence belongs to the UbiA prenyltransferase family. Protoheme IX farnesyltransferase subfamily.

The protein localises to the cell inner membrane. It catalyses the reaction heme b + (2E,6E)-farnesyl diphosphate + H2O = Fe(II)-heme o + diphosphate. Its pathway is porphyrin-containing compound metabolism; heme O biosynthesis; heme O from protoheme: step 1/1. In terms of biological role, converts heme B (protoheme IX) to heme O by substitution of the vinyl group on carbon 2 of heme B porphyrin ring with a hydroxyethyl farnesyl side group. In Shewanella amazonensis (strain ATCC BAA-1098 / SB2B), this protein is Protoheme IX farnesyltransferase.